We begin with the raw amino-acid sequence, 784 residues long: Cyclin-dependent kinase 11B (784 aa).

The span at 18 to 60 (QEKKRRKEQEEKAEIKRLKNSDDRDSKRDSLEEGELRDHRMEI) shows a compositional bias: basic and acidic residues. The segment at 18–401 (QEKKRRKEQE…EGDYVPDSPA (384 aa)) is disordered. 2 positions are modified to phosphoserine: serine 47 and serine 72. Basic residues predominate over residues 95 to 113 (EKAHHRKDEKRKEKRRHRS). 3 stretches are compositionally biased toward basic and acidic residues: residues 114–131 (HSAE…EREH), 138–227 (REEQ…DKGK), and 238–263 (PPRE…RDLL). Phosphoserine is present on serine 115. Residue serine 270 is modified to Phosphoserine. Over residues 278–289 (SAESSSAESGSG) the composition is skewed to low complexity. Composition is skewed to acidic residues over residues 290–353 (SEEE…EDRE) and 372–381 (DSEEGEEEVG). Positions 427–712 (FQCLNRIEEG…AEDGLKHEYF (286 aa)) constitute a Protein kinase domain. Residues 433–441 (IEEGTYGVV) and lysine 456 contribute to the ATP site. Serine 471 carries the phosphoserine; by CDK7 modification. A Phosphothreonine; by CDK7 modification is found at threonine 477. Catalysis depends on aspartate 551, which acts as the Proton acceptor. Phosphoserine is present on serine 578. The residue at position 583 (tyrosine 583) is a Phosphotyrosine. Threonine 584 carries the phosphothreonine modification. A Glycyl lysine isopeptide (Lys-Gly) (interchain with G-Cter in SUMO2) cross-link involves residue lysine 630. Residues 722-784 (SMFPTWPAKS…AAGPGFSLKF (63 aa)) form a disordered region. At threonine 740 the chain carries Phosphothreonine. Serine 741 carries the post-translational modification Phosphoserine.

The protein belongs to the protein kinase superfamily. CMGC Ser/Thr protein kinase family. CDC2/CDKX subfamily. May interact PAK1 and RANBP9. p110C interacts with RNPS1. Interacts with CCND3. Interacts with CCNL1 and CCNL2. Forms complexes with pre-mRNA-splicing factors, including at least SRSF1, SRSF2 AND SRSF7/SLU7. It depends on Mg(2+) as a cofactor. In terms of processing, phosphorylation at Ser-115 creates a binding site for 14-3-3 proteins.

It carries out the reaction L-seryl-[protein] + ATP = O-phospho-L-seryl-[protein] + ADP + H(+). The enzyme catalyses L-threonyl-[protein] + ATP = O-phospho-L-threonyl-[protein] + ADP + H(+). Its activity is regulated as follows. Phosphorylation at Thr-437 or Tyr-438 inactivates the enzyme, while phosphorylation at Thr-584 activates it. Plays multiple roles in cell cycle progression, cytokinesis and apoptosis. Involved in pre-mRNA splicing in a kinase activity-dependent manner. May act as a negative regulator of normal cell cycle progression. The chain is Cyclin-dependent kinase 11B (Cdk11b) from Mus musculus (Mouse).